The sequence spans 119 residues: Mitochondrial coiled-coil domain protein 1 (119 aa).

The N-terminal 24 residues, 1-24 (MVLPLPWLSRYHFLRLLLPSWSLA), are a transit peptide targeting the mitochondrion. The disordered stretch occupies residues 25-65 (PQGSHGCCSQNPKASMEEQTSSRGNGKMTSPPRGPGTHRTA). Polar residues predominate over residues 31-52 (CCSQNPKASMEEQTSSRGNGKM). The stretch at 62 to 116 (HRTAELARAEELLEQQLELYQALLEGQEGAWEAQALVLKIQKLKEQMRRHQESLG) forms a coiled coil.

Widely expressed. Expressed in adult and fetal liver, kidney and lung. Expressed in fetal brain. Weakly expressed in fetal spleen.

Its subcellular location is the mitochondrion. The protein is Mitochondrial coiled-coil domain protein 1 (MCCD1) of Homo sapiens (Human).